The following is a 145-amino-acid chain: Holo-[acyl-carrier-protein] synthase (145 aa).

Positions 8 and 59 each coordinate Mg(2+).

The protein belongs to the P-Pant transferase superfamily. AcpS family. Mg(2+) serves as cofactor.

The protein localises to the cytoplasm. The enzyme catalyses apo-[ACP] + CoA = holo-[ACP] + adenosine 3',5'-bisphosphate + H(+). Its function is as follows. Transfers the 4'-phosphopantetheine moiety from coenzyme A to a Ser of acyl-carrier-protein. In Granulibacter bethesdensis (strain ATCC BAA-1260 / CGDNIH1), this protein is Holo-[acyl-carrier-protein] synthase.